The chain runs to 582 residues: Myoneurin (582 aa).

The BTB domain occupies 24-89; that stretch reads CDCTIVIGEF…IYTGTLNLDS (66 aa). The tract at residues 169–197 is disordered; sequence QGALAKKSSQTKKKKKAFNSPKTGQNKTV. Short sequence motifs (nuclear localization signal) lie at residues 174–190 and 257–262; these read KKSS…NSPK and KRKRGK. The span at 188-197 shows a compositional bias: polar residues; sequence SPKTGQNKTV. Ser289 carries the post-translational modification Phosphoserine. The C2H2-type 1; degenerate zinc-finger motif lies at 302-324; sequence PMCNTRGKVFSEASSLRRHMRIH. 6 C2H2-type zinc fingers span residues 330–352, 358–381, 387–409, 415–437, 443–465, and 471–494; these read YVCH…VRTH, YKCE…RMHH, YKCD…ARKH, YVCD…VRRH, YVCD…SRKH, and FICE…TKVH. The segment at 489-538 is disordered; it reads HKTKVHSGADKTPDSSAEDHTLSEQDSIQKSPLSETMDVKPSDTTLPLAL. The span at 495–511 shows a compositional bias: basic and acidic residues; that stretch reads SGADKTPDSSAEDHTLS. The span at 512 to 522 shows a compositional bias: polar residues; the sequence is EQDSIQKSPLS.

It belongs to the krueppel C2H2-type zinc-finger protein family.

It localises to the nucleus. This chain is Myoneurin (MYNN), found in Pongo abelii (Sumatran orangutan).